The following is a 427-amino-acid chain: Glutamate-1-semialdehyde 2,1-aminomutase (427 aa).

Lys268 is modified (N6-(pyridoxal phosphate)lysine).

The protein belongs to the class-III pyridoxal-phosphate-dependent aminotransferase family. HemL subfamily. Pyridoxal 5'-phosphate is required as a cofactor.

It localises to the cytoplasm. The enzyme catalyses (S)-4-amino-5-oxopentanoate = 5-aminolevulinate. It functions in the pathway porphyrin-containing compound metabolism; protoporphyrin-IX biosynthesis; 5-aminolevulinate from L-glutamyl-tRNA(Glu): step 2/2. This Methanococcus vannielii (strain ATCC 35089 / DSM 1224 / JCM 13029 / OCM 148 / SB) protein is Glutamate-1-semialdehyde 2,1-aminomutase.